Here is a 474-residue protein sequence, read N- to C-terminus: Ribulose bisphosphate carboxylase large chain (474 aa).

Lys13 is subject to N6,N6,N6-trimethyllysine. Substrate contacts are provided by Asn122 and Thr172. Lys174 acts as the Proton acceptor in catalysis. Lys176 is a substrate binding site. 3 residues coordinate Mg(2+): Lys200, Asp202, and Glu203. Position 200 is an N6-carboxylysine (Lys200). His293 acts as the Proton acceptor in catalysis. Residues Arg294, His326, and Ser378 each coordinate substrate.

It belongs to the RuBisCO large chain family. Type I subfamily. Heterohexadecamer of 8 large chains and 8 small chains; disulfide-linked. The disulfide link is formed within the large subunit homodimers. Mg(2+) serves as cofactor. The disulfide bond which can form in the large chain dimeric partners within the hexadecamer appears to be associated with oxidative stress and protein turnover.

The protein resides in the plastid. It is found in the chloroplast. The catalysed reaction is 2 (2R)-3-phosphoglycerate + 2 H(+) = D-ribulose 1,5-bisphosphate + CO2 + H2O. It carries out the reaction D-ribulose 1,5-bisphosphate + O2 = 2-phosphoglycolate + (2R)-3-phosphoglycerate + 2 H(+). Its function is as follows. RuBisCO catalyzes two reactions: the carboxylation of D-ribulose 1,5-bisphosphate, the primary event in carbon dioxide fixation, as well as the oxidative fragmentation of the pentose substrate in the photorespiration process. Both reactions occur simultaneously and in competition at the same active site. The chain is Ribulose bisphosphate carboxylase large chain from Dendrophthora clavata (Columbian mistletoe).